The primary structure comprises 186 residues: Large ribosomal subunit protein uL22 (186 aa).

The disordered stretch occupies residues 160 to 186 (AAENEPAKKKLSKKKLQRQKEKMMRNE). Residues 177 to 186 (RQKEKMMRNE) show a composition bias toward basic and acidic residues.

It belongs to the universal ribosomal protein uL22 family.

This Aedes aegypti (Yellowfever mosquito) protein is Large ribosomal subunit protein uL22 (RpL17).